Reading from the N-terminus, the 184-residue chain is Autophagy-related protein 101 (184 aa).

It belongs to the ATG101 family. In terms of assembly, component of the atg1 kinase complex composed of at least atg1, atg13, atg17 and atg101. Interacts directly with atg13.

The protein localises to the cytoplasm. It is found in the nucleus. It localises to the preautophagosomal structure membrane. Functionally, autophagy factor required for autophagosome formation. Component of the atg1 kinase complex in which it stabilizes atg13. Is also responsible for recruiting downstream factors to the autophagosome-formation site. Has a role in meiosis and sporulation. The protein is Autophagy-related protein 101 of Schizosaccharomyces pombe (strain 972 / ATCC 24843) (Fission yeast).